Consider the following 82-residue polypeptide: Cytochrome b-c1 complex subunit 8 (82 aa).

Residues 1 to 39 lie on the Mitochondrial matrix side of the membrane; sequence MGREFGNLTRMRHVISYSLSPFEQRAHPHVFTKGIPNVL. Ser-16 bears the Phosphoserine mark. Position 33 is an N6-acetyllysine; alternate (Lys-33). The residue at position 33 (Lys-33) is an N6-succinyllysine; alternate. A helical membrane pass occupies residues 40–68; sequence RRFRESFFRVAPQFVVFYLIYTWGTEEFE. Residues 69–82 are Mitochondrial intermembrane-facing; sequence RSKRKNPAAYENDK.

It belongs to the UQCRQ/QCR8 family. In terms of assembly, component of the ubiquinol-cytochrome c oxidoreductase (cytochrome b-c1 complex, complex III, CIII), a multisubunit enzyme composed of 11 subunits. The complex is composed of 3 respiratory subunits cytochrome b, cytochrome c1 and Rieske protein UQCRFS1, 2 core protein subunits UQCRC1/QCR1 and UQCRC2/QCR2, and 6 low-molecular weight protein subunits UQCRH/QCR6, UQCRB/QCR7, UQCRQ/QCR8, UQCR10/QCR9, UQCR11/QCR10 and subunit 9, the cleavage product of Rieske protein UQCRFS1. The complex exists as an obligatory dimer and forms supercomplexes (SCs) in the inner mitochondrial membrane with NADH-ubiquinone oxidoreductase (complex I, CI) and cytochrome c oxidase (complex IV, CIV), resulting in different assemblies (supercomplex SCI(1)III(2)IV(1) and megacomplex MCI(2)III(2)IV(2)). Interacts with UQCC6.

It is found in the mitochondrion inner membrane. In terms of biological role, component of the ubiquinol-cytochrome c oxidoreductase, a multisubunit transmembrane complex that is part of the mitochondrial electron transport chain which drives oxidative phosphorylation. The respiratory chain contains 3 multisubunit complexes succinate dehydrogenase (complex II, CII), ubiquinol-cytochrome c oxidoreductase (cytochrome b-c1 complex, complex III, CIII) and cytochrome c oxidase (complex IV, CIV), that cooperate to transfer electrons derived from NADH and succinate to molecular oxygen, creating an electrochemical gradient over the inner membrane that drives transmembrane transport and the ATP synthase. The cytochrome b-c1 complex catalyzes electron transfer from ubiquinol to cytochrome c, linking this redox reaction to translocation of protons across the mitochondrial inner membrane, with protons being carried across the membrane as hydrogens on the quinol. In the process called Q cycle, 2 protons are consumed from the matrix, 4 protons are released into the intermembrane space and 2 electrons are passed to cytochrome c. In Pongo abelii (Sumatran orangutan), this protein is Cytochrome b-c1 complex subunit 8 (UQCRQ).